The sequence spans 257 residues: N-acetylglucosaminyldiphosphoundecaprenol N-acetyl-beta-D-mannosaminyltransferase (257 aa).

This sequence belongs to the glycosyltransferase 26 family. TagA/TarA subfamily.

It carries out the reaction UDP-N-acetyl-alpha-D-mannosamine + N-acetyl-alpha-D-glucosaminyl-di-trans,octa-cis-undecaprenyl diphosphate = N-acetyl-beta-D-mannosaminyl-(1-&gt;4)-N-acetyl-alpha-D-glucosaminyl di-trans,octa-cis-undecaprenyl diphosphate + UDP + H(+). Its pathway is cell wall biogenesis; poly(ribitol phosphate) teichoic acid biosynthesis. Its function is as follows. Catalyzes the conversion of GlcNAc-PP-undecaprenol into ManNAc-GlcNAc-PP-undecaprenol, the first committed lipid intermediate in the de novo synthesis of teichoic acid. This Bacillus spizizenii (strain ATCC 23059 / NRRL B-14472 / W23) (Bacillus subtilis subsp. spizizenii) protein is N-acetylglucosaminyldiphosphoundecaprenol N-acetyl-beta-D-mannosaminyltransferase.